The following is a 692-amino-acid chain: Elongation factor G (692 aa).

A tr-type G domain is found at 8–282; it reads ENTRNIGIMA…GVVDYLPSPL (275 aa). Residues 17 to 24, 81 to 85, and 135 to 138 contribute to the GTP site; these read AHIDAGKT, DTPGH, and NKMD.

Belongs to the TRAFAC class translation factor GTPase superfamily. Classic translation factor GTPase family. EF-G/EF-2 subfamily.

The protein localises to the cytoplasm. In terms of biological role, catalyzes the GTP-dependent ribosomal translocation step during translation elongation. During this step, the ribosome changes from the pre-translocational (PRE) to the post-translocational (POST) state as the newly formed A-site-bound peptidyl-tRNA and P-site-bound deacylated tRNA move to the P and E sites, respectively. Catalyzes the coordinated movement of the two tRNA molecules, the mRNA and conformational changes in the ribosome. In Geobacillus thermodenitrificans (strain NG80-2), this protein is Elongation factor G.